The chain runs to 229 residues: 7-cyano-7-deazaguanine synthase (229 aa).

Residue 7-17 (LSGGLDSSTIL) coordinates ATP. 4 residues coordinate Zn(2+): Cys191, Cys199, Cys202, and Cys205.

This sequence belongs to the QueC family. Zn(2+) serves as cofactor.

The catalysed reaction is 7-carboxy-7-deazaguanine + NH4(+) + ATP = 7-cyano-7-deazaguanine + ADP + phosphate + H2O + H(+). The protein operates within purine metabolism; 7-cyano-7-deazaguanine biosynthesis. Functionally, catalyzes the ATP-dependent conversion of 7-carboxy-7-deazaguanine (CDG) to 7-cyano-7-deazaguanine (preQ(0)). The polypeptide is 7-cyano-7-deazaguanine synthase (Nostoc sp. (strain PCC 7120 / SAG 25.82 / UTEX 2576)).